The primary structure comprises 309 residues: Aromatic prenyltransferase (309 aa).

Belongs to the aromatic prenyltransferase family.

Functionally, prenyltransferase that attaches isoprenoid moieties to carbon atoms of aromatic substrates in an enzyme-catalyzed Friedel-Crafts reaction. Shows specificity for dimethylallyl diphosphate (DMAPP) and does not accept geranyl diphosphate (GPP) or isopentenyl diphosphate (IPP). Prenylates the artificial substrate 2,7-dihydroxynaphthalene (2,7-DHN), as well as dihydrophenazine-1-carboxylic acid and 4-hydroxybenzoic acid at lower levels. Only traces of products are detected with aspulvinone E or flaviolin as substrates; and no product is formed with L-tryptophan, L-tyrosine, or 4-hydroxyphenylpyruvate. Ptf seems no to be involved in the prenylation reaction in the biosynthesis of aspulvinone H and J and the physiological function of ptf remains unknown. This chain is Aromatic prenyltransferase, found in Botryotinia fuckeliana (strain B05.10) (Noble rot fungus).